We begin with the raw amino-acid sequence, 321 residues long: Lipoyl synthase (321 aa).

[4Fe-4S] cluster is bound by residues C68, C73, C79, C94, C98, C101, and S308. Residues 80 to 297 form the Radical SAM core domain; sequence FNHGTATFMI…KAEALAMGFT (218 aa).

Belongs to the radical SAM superfamily. Lipoyl synthase family. The cofactor is [4Fe-4S] cluster.

The protein localises to the cytoplasm. The enzyme catalyses [[Fe-S] cluster scaffold protein carrying a second [4Fe-4S](2+) cluster] + N(6)-octanoyl-L-lysyl-[protein] + 2 oxidized [2Fe-2S]-[ferredoxin] + 2 S-adenosyl-L-methionine + 4 H(+) = [[Fe-S] cluster scaffold protein] + N(6)-[(R)-dihydrolipoyl]-L-lysyl-[protein] + 4 Fe(3+) + 2 hydrogen sulfide + 2 5'-deoxyadenosine + 2 L-methionine + 2 reduced [2Fe-2S]-[ferredoxin]. The protein operates within protein modification; protein lipoylation via endogenous pathway; protein N(6)-(lipoyl)lysine from octanoyl-[acyl-carrier-protein]: step 2/2. In terms of biological role, catalyzes the radical-mediated insertion of two sulfur atoms into the C-6 and C-8 positions of the octanoyl moiety bound to the lipoyl domains of lipoate-dependent enzymes, thereby converting the octanoylated domains into lipoylated derivatives. This is Lipoyl synthase from Salmonella typhi.